The sequence spans 662 residues: Carboxysome assembly protein CsoS2 (662 aa).

An N-terminal domain region spans residues 1–227 (MSTSNAQSGR…KRRNAKEAPQ (227 aa)). Disordered stretches follow at residues 1 to 258 (MSTS…SESG), 277 to 322 (NCDV…TCSA), and 342 to 419 (PAKS…RGSC). The N-repeat 1 repeat unit spans residues 8-27 (SGRAAAIARRNAQVKGKGYT). Low complexity-rich tracts occupy residues 28-57 (ASAAPAAPRKPAAPVAEPVVAAAPAPSQPS) and 64-76 (SVAPTATPAASAA). One copy of the N-repeat 2 repeat lies at 58 to 72 (RSRRKVSVAPTATPA). Residues 120 to 135 (RQAKAEKPTKRSERRT) show a composition bias toward basic and acidic residues. A compositionally biased stretch (polar residues) spans 141 to 150 (VASQQPSGRL). The N-repeat 3 repeat unit spans residues 147–168 (SGRLQSKAYRKAQAKGKAGQEA). Low complexity-rich tracts occupy residues 161–170 (KGKAGQEAFK), 237–247 (GQSVSGTQVGQ), and 289–300 (VTQTQTTRGQVV). 5 M-repeat repeats span residues 228–278 (KVGE…SKNC), 288–338 (KVTQ…KMYC), 388–436 (KVMP…AKAC), 446–491 (KVTA…TEQF), and 496–550 (VDEQ…AMVC). The segment at 228–559 (KVGESQTLHG…CDSTNAAAPG (332 aa)) is middle region. Residues 391-404 (PSQTAKGNTTTGSQ) show a composition bias toward polar residues. Residues 560-631 (ESDFPAMIGQ…SPMGASQYRP (72 aa)) are C-terminal domain. The stretch at 564–572 (PAMIGQAQP) is one C-repeat 1 repeat. Disordered stretches follow at residues 588-607 (KITGDGWDRGSKVTGTDGPW) and 619-662 (AGQS…GARA). The tract at residues 632 to 662 (VNNEVPMSPITGSSGNTDTGAKVTLSGGARA) is C-terminal peptide. Positions 641-650 (ITGSSGNTDT) are enriched in polar residues.

The protein belongs to the CsoS2 family. In terms of assembly, interacts via its N-terminal repeats with RuBisCO. Interacts with the major shell protein CsoS1. Post-translationally, unlike H.neapolitanus and predictions for P.marinus strain MIT 9313, this protein is not thought to have ribosomal frameshifting.

It is found in the carboxysome. Required for alpha-carboxysome (Cb) assembly, mediates interaction between RuBisCO and the Cb shell. The protein is probably intrinsically disordered. The C-terminal repeats act as the encapsulation signal to target proteins to the Cb; they are necessary and sufficient to target both CsoS2 and foreign proteins to the Cb. The N-terminal repeats of this protein bind simultaneously to both subunits of RuBisCO. Probably also interacts with the major shell proteins (CsoS1); that interaction would increase the local concentration of CsoS2 so that it can condense RuBisCO and full carboxysomes can be formed. The polypeptide is Carboxysome assembly protein CsoS2 (Hydrogenovibrio crunogenus (strain DSM 25203 / XCL-2) (Thiomicrospira crunogena)).